The chain runs to 233 residues: Inner kinetochore subunit fta4 (233 aa).

Phosphothreonine is present on residues Thr189 and Thr191.

It belongs to the NKP1 family. Component of the inner kinetochore constitutive centromere-associated network (CCAN) (also known as central kinetochore Sim4 complex in fission yeast), which is composed of at least cnl2, cnp3, cnp20, fta1, fta2, fta3, fta4, fta6, fta7, mal2, mhf1, mhf2, mis6, mis15, mis17, sim4 and wip1.

It is found in the nucleus. The protein resides in the chromosome. The protein localises to the centromere. It localises to the kinetochore. Its function is as follows. Component of the kinetochore, a multiprotein complex that assembles on centromeric DNA and attaches chromosomes to spindle microtubules, mediating chromosome segregation and sister chromatid segregation during meiosis and mitosis. Component of the inner kinetochore constitutive centromere-associated network (CCAN), which serves as a structural platform for outer kinetochore assembly. Fta2, fta3 and fta4 associate with the central core (cnt) and inner repeat (inr) region of the centromere. This chain is Inner kinetochore subunit fta4 (fta4), found in Schizosaccharomyces pombe (strain 972 / ATCC 24843) (Fission yeast).